Consider the following 1207-residue polypeptide: MVDVNKFESMRIGIASPQKIRYWSFGEVKKPETINYRTQKPEREGLFDERIFGPQKDWECACGKLKGVFYKNQVCELCGVQVTTAKSRRERMGHIELAAPISHIWYFKGIPSRMGLALDMSPRALEEVIYFASYVVIDPKETDLEKKQLLTEREYREQLLKNGFGSFVAKMGAEAIQDLLNDVDIDKEVAELKEELKTVTGQRRVKIIRRLDVLSAFRKSGNALSWMVLNVLPVIPPDLRPMVQLDGGRFATSDLNDLYRRVINRNNRLKRLMELNAPNIIVQNEKRMLQEAVDTLIDNGRRGRPITGAGNRPLKSLSHMLKGKQGRFRQNLLGKRVDYSGRSVIAVGPTLKMYQCGVPREMAIELFKPFVMAQLVKKELAANIRAAKRKVERQDSDVWDVLETVVKEHPVLLNRAPTLHRLGIQAFEPVLIDGKAIRLHPLACEAYNADFDGDQMAIHLPLSEEAQAEARLLMLAAEHILNPKDGKPVVTPSQDMVLGNYYLTMEEKGREGEGMIFATPEEVEIAMRNGYVHLHTRIGIATKSLNKPWTENQQDKILVTTVGKVIFNSIIPEGMPYLNEPTDVNLTTSTDDRFFMDAGQNIKEVLAGIDTVRPFKKGYLGNIIAEVFKRYRTTATSEYLDRLKDLGYYQSTLAGLTVGIADIPVVEDKHEIIDAAHKRVEQITKQFRRGLITDDERYNAVTGVWRDAKESLEKRLIEEQDLTNPIVMMMDSGARGNISNFSQLAGMRGLMAAPNGKIMELPIISNFREGLSVLEMFFSTHGARKGMTDTALKTADSGYLTRRLVDVAQDVIIREDDCGTDRGLVIADIATGKEMVEPLFERLVGRYTRKSVLHPETGEMIIGDDTLISEDIARKIIEAGVKEVTIRSVFTCKTPHGVCKHCYGINLATGDAVEVGEAVGTIAAQSIGEPGTQLTMRTFHTGGVASSSDITQGLPRVQEIFEARNPKGEAIITEVTGTVESIVEDGATRTREITVKGKTDTRSYTVGMADVLMVEEGEFIHRGAPLIQGSIEPKHLLQVRDALSVETYLLGEVQKTYRSQGVEIGDKHIEVMVRQMLRKVRIMDNGSIDVLPGTLMDISDFEALNETALLNGEMPATGRPVLMGITKASLETNSFLSAASFQETTRVLTDAAIRGKEDHLLGLKENVIIGKIIPAGTGMFRYRNIEPLADLTNAPEVKEVETETVEN.

Positions 60, 62, 75, and 78 each coordinate Zn(2+). Positions 450, 452, and 454 each coordinate Mg(2+). 4 residues coordinate Zn(2+): C818, C892, C899, and C902.

Belongs to the RNA polymerase beta' chain family. In terms of assembly, the RNAP catalytic core consists of 2 alpha, 1 beta, 1 beta' and 1 omega subunit. When a sigma factor is associated with the core the holoenzyme is formed, which can initiate transcription. The cofactor is Mg(2+). Zn(2+) is required as a cofactor.

It catalyses the reaction RNA(n) + a ribonucleoside 5'-triphosphate = RNA(n+1) + diphosphate. Its function is as follows. DNA-dependent RNA polymerase catalyzes the transcription of DNA into RNA using the four ribonucleoside triphosphates as substrates. This Lactococcus lactis subsp. cremoris (strain SK11) protein is DNA-directed RNA polymerase subunit beta'.